A 430-amino-acid polypeptide reads, in one-letter code: RNA-binding protein 34 (430 aa).

Disordered stretches follow at residues 1–55 (MALE…GTGR), 72–123 (VPVP…ADRE), and 134–153 (EIHQKQGQKRKNSQPGVKVA). Phosphoserine occurs at positions 14, 28, and 99. Positions 23–34 (DGVRGSPPEDYR) are enriched in basic and acidic residues. A compositionally biased stretch (basic and acidic residues) spans 113–123 (TNAEKKLADRE). The residue at position 151 (Lys-151) is an N6-acetyllysine. RRM domains follow at residues 185–280 (RTVF…LASE) and 287–364 (RSVF…RSVN). Lys-242 participates in a covalent cross-link: Glycyl lysine isopeptide (Lys-Gly) (interchain with G-Cter in SUMO2). Ser-288 carries the post-translational modification Phosphoserine. Disordered regions lie at residues 365-395 (KEKFKQQNSNPRLKNVSKPKQGLNFTSKTAE) and 411-430 (KTKKKGQKKSGRPKKQRKQK).

Belongs to the RRM RBM34 family.

The protein localises to the nucleus. Its subcellular location is the nucleolus. The protein is RNA-binding protein 34 (RBM34) of Homo sapiens (Human).